We begin with the raw amino-acid sequence, 109 residues long: Ferredoxin (109 aa).

2 4Fe-4S ferredoxin-type domains span residues 2–30 (TYVVTDECVKCKYTDCVEVCPVDCFYEGE) and 31–60 (FMLVINPDECIDCGVCVPDCPIDAIKPESP). [3Fe-4S] cluster contacts are provided by Cys9 and Cys17. Residues Cys21, Cys40, Cys43, and Cys46 each contribute to the [4Fe-4S] cluster site. Cys50 contacts [3Fe-4S] cluster.

It depends on [4Fe-4S] cluster as a cofactor. [3Fe-4S] cluster serves as cofactor.

In terms of biological role, ferredoxins are iron-sulfur proteins that transfer electrons in a wide variety of metabolic reactions. This Rickettsia prowazekii (strain Madrid E) protein is Ferredoxin (fdxA).